A 383-amino-acid chain; its full sequence is Presenilin-associated rhomboid-like protein A, mitochondrial (383 aa).

A mitochondrion-targeting transit peptide spans 1–37 (MAWRSCFMKWTQINSINASSLCPKSTRLNIHPQQRCG). A disordered region spans residues 35–75 (RCGFRKTERPSESKKGVQETEAEAGGHNRAVPPKPVPPLPP). Residues 38-83 (FRKTERPSESKKGVQETEAEAGGHNRAVPPKPVPPLPPRRPHQLFR) are Mitochondrial matrix-facing. The segment covering 39 to 52 (RKTERPSESKKGVQ) has biased composition (basic and acidic residues). Residues 66–75 (PPKPVPPLPP) show a composition bias toward pro residues. The chain crosses the membrane as a helical span at residues 84 to 104 (PLVFTVGFTGCSFGAAAILQY). At 105 to 168 (ESVKSRVQLA…FWSGLSEGQK (64 aa)) the chain is on the mitochondrial intermembrane side. Residues 169–189 (TVTGIIALNTVVLCCWRVPAM) form a helical membrane-spanning segment. The Mitochondrial matrix portion of the chain corresponds to 190–219 (QRFLVKYFTSNPASKTRCLPMVLSSFSHYS). Residues 220–240 (VIHMVVNMYVLWTFSSSIVSL) form a helical membrane-spanning segment. Residues 241–245 (LGREQ) lie on the Mitochondrial intermembrane side of the membrane. The chain crosses the membrane as a helical span at residues 246–266 (FLALYLSGGVISTFVSYVFKT). The Mitochondrial matrix portion of the chain corresponds to 267-271 (ATGRL). A helical membrane pass occupies residues 272–292 (GPSLGASGSIMTVLAAVCTKI). Residue Ser278 is the Nucleophile of the active site. At 293-298 (PEAKLG) the chain is on the mitochondrial intermembrane side. Residues 299-319 (IVLLPVISFSAGNALKALVAL) traverse the membrane as a helical segment. Residues 320-334 (DIAGLVLGWRFFDHA) are Mitochondrial matrix-facing. Residues 335–355 (AHLGGALFGVWYIGYGHELIW) form a helical membrane-spanning segment. His336 is a catalytic residue. The Mitochondrial intermembrane segment spans residues 356-383 (RKREPLIKFWHELRNMSPGRPGPGGGGG).

The protein belongs to the peptidase S54 family.

The protein localises to the mitochondrion inner membrane. It carries out the reaction Cleaves type-1 transmembrane domains using a catalytic dyad composed of serine and histidine that are contributed by different transmembrane domains.. In terms of biological role, required for the control of apoptosis during postnatal growth. Essential for proteolytic processing of an antiapoptotic form of opa1 which prevents the release of mitochondrial cytochrome c in response to intrinsic apoptotic signals. This chain is Presenilin-associated rhomboid-like protein A, mitochondrial (parla), found in Danio rerio (Zebrafish).